A 555-amino-acid chain; its full sequence is Sulfite reductase [NADPH] hemoprotein beta-component (555 aa).

[4Fe-4S] cluster-binding residues include Cys430, Cys436, Cys475, and Cys479. Cys479 lines the siroheme pocket.

Belongs to the nitrite and sulfite reductase 4Fe-4S domain family. As to quaternary structure, alpha(8)-beta(8). The alpha component is a flavoprotein, the beta component is a hemoprotein. The cofactor is siroheme. It depends on [4Fe-4S] cluster as a cofactor.

It carries out the reaction hydrogen sulfide + 3 NADP(+) + 3 H2O = sulfite + 3 NADPH + 4 H(+). It functions in the pathway sulfur metabolism; hydrogen sulfide biosynthesis; hydrogen sulfide from sulfite (NADPH route): step 1/1. Component of the sulfite reductase complex that catalyzes the 6-electron reduction of sulfite to sulfide. This is one of several activities required for the biosynthesis of L-cysteine from sulfate. This is Sulfite reductase [NADPH] hemoprotein beta-component from Leptospira biflexa serovar Patoc (strain Patoc 1 / Ames).